The chain runs to 320 residues: MKIIFAGTPEFAATALAALLKTSHEIIAVYTQPDRKAGRGQKLTPSPVKQLALEHNIPVYQPLHFKASTEEGLAAQQELAALGADVMVVAAYGLILPQAVLDTPKYGCLNIHGSLLPRWRGAAPIQRAIATGDDETGITIMQMAAGLDTGDMMYKTYCPIASEDTSATLHDKLAAQGATAICAVLESEETLQKYLAEREVQDESLTVYAHKLVKSEARIDWSMNAVQVDRNIRAFNPWPVAFIQLDENNALRVWNSIISSQSKVNAQAGEIIAIDKQGVHVACGENTFICLTSVQWPGGKALNAQQIAQTQKLHVGQILP.

114–117 (SLLP) provides a ligand contact to (6S)-5,6,7,8-tetrahydrofolate.

The protein belongs to the Fmt family.

It carries out the reaction L-methionyl-tRNA(fMet) + (6R)-10-formyltetrahydrofolate = N-formyl-L-methionyl-tRNA(fMet) + (6S)-5,6,7,8-tetrahydrofolate + H(+). Its function is as follows. Attaches a formyl group to the free amino group of methionyl-tRNA(fMet). The formyl group appears to play a dual role in the initiator identity of N-formylmethionyl-tRNA by promoting its recognition by IF2 and preventing the misappropriation of this tRNA by the elongation apparatus. The chain is Methionyl-tRNA formyltransferase from Acinetobacter baumannii (strain AB0057).